Reading from the N-terminus, the 721-residue chain is Protein quick-to-court (721 aa).

5 disordered regions span residues 1–42 (MMTS…RIPH), 143–210 (VGNS…ASVA), 360–379 (SSPEERSASSDAVTVREAEL), 393–428 (DEGNAKGSPRHLSRQQQQQANHSLQAMQMSAEMQSS), and 441–471 (SSVHSKDSQTQSEACGTATPDGEADVGCGAG). A compositionally biased stretch (basic and acidic residues) spans 17–31 (QVQREKDNDSAEDSH). The segment covering 161–201 (NGGSDISSSGTSSSSSNNKESSPRTTRTPRTPQTPQTPQTP) has biased composition (low complexity). A compositionally biased stretch (basic and acidic residues) spans 362–379 (PEERSASSDAVTVREAEL). Residues 406 to 420 (RQQQQQANHSLQAMQ) are compositionally biased toward low complexity. The span at 441 to 454 (SSVHSKDSQTQSEA) shows a compositional bias: polar residues. The stretch at 511-569 (KRSHNDKVEALLQKLAECNTRYSDMVPDYEQAKQRIRELEKQLEDLQRKLIEHEEKQNK) forms a coiled coil. The region spanning 668-716 (HVDPEVTLQFLKSAIFYFLTDKENSQGHLQAIESILEFTDAEKQKISAA) is the GRIP domain.

Expressed in the third antennal segment and the maxillary palp, with increased expression near the cuticle of both olfactory organs. Also detected in the second antenna segment. In the brain, expressed in the central nervous system, with high levels of expression in the visual system including the retina and optic lobe, and uniform expression in the cortex. Detected in the thorax and abdomen, with increased expression in the ventral ganglion. In males, detected in the reproductive tract including the ejaculatory bulb and testis.

Its function is as follows. In adult males, modulates sexual behavior by playing a role in sex discrimination and maintaining normal levels of sexual activity towards both males and females. This Drosophila melanogaster (Fruit fly) protein is Protein quick-to-court.